Consider the following 522-residue polypeptide: Calcium-dependent protein kinase 4 (522 aa).

Polar residues predominate over residues 1 to 10 (MGACFSSHTA). The interval 1–43 (MGACFSSHTATAAADGGSGKRQQRKGDHKGKLPDGGGGEKEKE) is disordered. Gly-2 carries the N-myristoyl glycine lipid modification. The segment covering 29-43 (KGKLPDGGGGEKEKE) has biased composition (basic and acidic residues). The Protein kinase domain maps to 59 to 319 (YQVGRLLGHG…AAQALSHPWV (261 aa)). ATP is bound by residues 65-73 (LGHGQFGYT) and Lys-88. The Proton acceptor role is filled by Asp-185. The interval 325–355 (ASEIPVDISVLSNMRQFVKYSRFKQFALRAL) is autoinhibitory domain. EF-hand domains follow at residues 362 to 397 (EELADLKDQFDAIDVDKSGSISIEEMRHALAKDLPW), 399 to 434 (LKGPRVLEIIQAIDSNTDGLVDFEEFVAATLHIHQM), 441 to 476 (RWGLRCQAAFSKFDLDGDGYITPDELRMVQHTGLKG), and 481 to 508 (LLEEADIDKDGRISLSEFRKLLRTASMS). 19 residues coordinate Ca(2+): Asp-375, Asp-377, Ser-379, Ser-381, Glu-386, Asp-412, Asn-414, Asp-416, Glu-423, Asp-454, Asp-456, Asp-458, Tyr-460, Glu-465, Asp-486, Asp-488, Asp-490, Arg-492, and Glu-497.

Belongs to the protein kinase superfamily. Ser/Thr protein kinase family. CDPK subfamily.

The protein localises to the membrane. It catalyses the reaction L-seryl-[protein] + ATP = O-phospho-L-seryl-[protein] + ADP + H(+). The catalysed reaction is L-threonyl-[protein] + ATP = O-phospho-L-threonyl-[protein] + ADP + H(+). With respect to regulation, activated by calcium. Autophosphorylation may play an important role in the regulation of the kinase activity. In terms of biological role, may play a role in signal transduction pathways that involve calcium as a second messenger. The chain is Calcium-dependent protein kinase 4 from Oryza sativa subsp. japonica (Rice).